The primary structure comprises 123 residues: Putative iron-sulfur cluster insertion protein ErpA (123 aa).

Residues C51, C115, and C117 each contribute to the iron-sulfur cluster site.

Belongs to the HesB/IscA family. In terms of assembly, homodimer. It depends on iron-sulfur cluster as a cofactor.

In terms of biological role, required for insertion of 4Fe-4S clusters. This is Putative iron-sulfur cluster insertion protein ErpA from Bordetella bronchiseptica (strain ATCC BAA-588 / NCTC 13252 / RB50) (Alcaligenes bronchisepticus).